The following is a 221-amino-acid chain: uncharacterized protein (221 aa).

The N-terminal stretch at 1–18 (MKRFLLLIILFGISFSFV) is a signal peptide.

This is an uncharacterized protein from Aquifex aeolicus (strain VF5).